A 378-amino-acid chain; its full sequence is Manganese peroxidase 1 (378 aa).

The first 21 residues, 1-21 (MAFKSLIAFVALAAAVRAAPT), serve as a signal peptide directing secretion. Intrachain disulfides connect Cys-24–Cys-36, Cys-35–Cys-310, Cys-54–Cys-138, Cys-274–Cys-340, and Cys-362–Cys-369. The Mn(2+) site is built by Glu-56 and Glu-60. Residue His-67 is the Proton acceptor of the active site. The Ca(2+) site is built by Asp-68, Gly-83, Asp-85, and Ser-87. N-linked (GlcNAc...) asparagine glycans are attached at residues Asn-97 and Asn-152. Position 194 (His-194) interacts with heme b. Ser-195 lines the Ca(2+) pocket. A Mn(2+)-binding site is contributed by Asp-200. Residues Asp-212, Thr-214, Thr-217, and Asp-219 each contribute to the Ca(2+) site. N-linked (GlcNAc...) asparagine glycosylation occurs at Asn-238.

The protein belongs to the peroxidase family. Ligninase subfamily. Requires Ca(2+) as cofactor. It depends on heme b as a cofactor.

Its subcellular location is the secreted. The enzyme catalyses 2 Mn(2+) + H2O2 + 2 H(+) = 2 Mn(3+) + 2 H2O. Catalyzes the oxidation of Mn(2+) to Mn(3+). The latter, acting as a diffusible redox mediator, is capable of oxidizing a variety of lignin compounds. The protein is Manganese peroxidase 1 (MNP1) of Phanerodontia chrysosporium (White-rot fungus).